The chain runs to 88 residues: UPF0250 protein Sputcn32_2874 (88 aa).

The protein belongs to the UPF0250 family.

The chain is UPF0250 protein Sputcn32_2874 from Shewanella putrefaciens (strain CN-32 / ATCC BAA-453).